The sequence spans 445 residues: Phosphoglucosamine mutase (445 aa).

The Phosphoserine intermediate role is filled by Ser102. Ser102, Asp241, Asp243, and Asp245 together coordinate Mg(2+). Ser102 is modified (phosphoserine).

The protein belongs to the phosphohexose mutase family. Mg(2+) serves as cofactor. Post-translationally, activated by phosphorylation.

The enzyme catalyses alpha-D-glucosamine 1-phosphate = D-glucosamine 6-phosphate. In terms of biological role, catalyzes the conversion of glucosamine-6-phosphate to glucosamine-1-phosphate. The protein is Phosphoglucosamine mutase of Aliivibrio salmonicida (strain LFI1238) (Vibrio salmonicida (strain LFI1238)).